Here is a 343-residue protein sequence, read N- to C-terminus: Dihydroorotase (343 aa).

The Zn(2+) site is built by His13 and His15. Substrate is bound by residues 15–17 (HFR) and Asn41. Positions 98, 135, and 173 each coordinate Zn(2+). Lys98 carries the N6-carboxylysine modification. Residue His135 participates in substrate binding. A substrate-binding site is contributed by Leu218. Asp246 is a binding site for Zn(2+). Asp246 is an active-site residue. Residues His250 and Ala262 each contribute to the substrate site.

It belongs to the metallo-dependent hydrolases superfamily. DHOase family. Class II DHOase subfamily. As to quaternary structure, homodimer. Zn(2+) serves as cofactor.

It catalyses the reaction (S)-dihydroorotate + H2O = N-carbamoyl-L-aspartate + H(+). Its pathway is pyrimidine metabolism; UMP biosynthesis via de novo pathway; (S)-dihydroorotate from bicarbonate: step 3/3. Its function is as follows. Catalyzes the reversible cyclization of carbamoyl aspartate to dihydroorotate. This Marinomonas sp. (strain MWYL1) protein is Dihydroorotase.